Consider the following 729-residue polypeptide: Catalase-peroxidase (729 aa).

The interval 1-24 is disordered; sequence MDAKTNDGKAGQCPFTSGRGHKNR. The segment at residues 95 to 217 is a cross-link (tryptophyl-tyrosyl-methioninium (Trp-Tyr) (with M-243)); the sequence is WHSAGTYRIT…LAAVQMGLIY (123 aa). His96 functions as the Proton acceptor in the catalytic mechanism. The tryptophyl-tyrosyl-methioninium (Tyr-Met) (with W-95) cross-link spans 217–243; that stretch reads YVNPEGPNGQPDPLAAAKDIRETFLRM. Position 258 (His258) interacts with heme b.

Belongs to the peroxidase family. Peroxidase/catalase subfamily. In terms of assembly, homodimer or homotetramer. Heme b is required as a cofactor. Post-translationally, formation of the three residue Trp-Tyr-Met cross-link is important for the catalase, but not the peroxidase activity of the enzyme.

It catalyses the reaction H2O2 + AH2 = A + 2 H2O. The enzyme catalyses 2 H2O2 = O2 + 2 H2O. Bifunctional enzyme with both catalase and broad-spectrum peroxidase activity. The sequence is that of Catalase-peroxidase from Nitrobacter winogradskyi (strain ATCC 25391 / DSM 10237 / CIP 104748 / NCIMB 11846 / Nb-255).